We begin with the raw amino-acid sequence, 605 residues long: Isocitrate dehydrogenase kinase/phosphatase (605 aa).

ATP contacts are provided by residues 327 to 333 and Lys-348; that span reads APGIKGL. Residue Asp-383 is part of the active site.

This sequence belongs to the AceK family.

Its subcellular location is the cytoplasm. The enzyme catalyses L-seryl-[isocitrate dehydrogenase] + ATP = O-phospho-L-seryl-[isocitrate dehydrogenase] + ADP + H(+). Its function is as follows. Bifunctional enzyme which can phosphorylate or dephosphorylate isocitrate dehydrogenase (IDH) on a specific serine residue. This is a regulatory mechanism which enables bacteria to bypass the Krebs cycle via the glyoxylate shunt in response to the source of carbon. When bacteria are grown on glucose, IDH is fully active and unphosphorylated, but when grown on acetate or ethanol, the activity of IDH declines drastically concomitant with its phosphorylation. This Burkholderia orbicola (strain AU 1054) protein is Isocitrate dehydrogenase kinase/phosphatase.